The chain runs to 96 residues: Phosphoribosyl-ATP pyrophosphatase (96 aa).

Belongs to the PRA-PH family.

The protein resides in the cytoplasm. The catalysed reaction is 1-(5-phospho-beta-D-ribosyl)-ATP + H2O = 1-(5-phospho-beta-D-ribosyl)-5'-AMP + diphosphate + H(+). Its pathway is amino-acid biosynthesis; L-histidine biosynthesis; L-histidine from 5-phospho-alpha-D-ribose 1-diphosphate: step 2/9. The sequence is that of Phosphoribosyl-ATP pyrophosphatase from Methanococcus maripaludis (strain C6 / ATCC BAA-1332).